The primary structure comprises 347 residues: Haptoglobin (347 aa).

The signal sequence occupies residues 1 to 18 (MSALGAVIALLLWGQLFA). In terms of domain architecture, Sushi spans 31-88 (DGCPKPPQIAHGYVEHSVRYQCKNYYRLRTEGDGVYTLNSEKQWINKAVGDKLPECEA). Intrachain disulfides connect cysteine 52–cysteine 86, cysteine 90–cysteine 207, cysteine 250–cysteine 281, and cysteine 292–cysteine 322. The Peptidase S1 domain occupies 103-347 (ILGGHLDAKG…DWVQKTIAKN (245 aa)). N-linked (GlcNAc...) asparagine glycans are attached at residues asparagine 125, asparagine 148, asparagine 152, and asparagine 182. An interaction with CD163 region spans residues 259–264 (VPEKKT).

This sequence belongs to the peptidase S1 family. In terms of assembly, tetramer of two alpha and two beta chains; disulfide-linked. The hemoglobin/haptoglobin complex is composed of a haptoglobin dimer bound to two hemoglobin alpha-beta dimers. Interacts with CD163. Interacts with ERGIC3.

It localises to the secreted. As a result of hemolysis, hemoglobin is found to accumulate in the kidney and is secreted in the urine. Haptoglobin captures, and combines with free plasma hemoglobin to allow hepatic recycling of heme iron and to prevent kidney damage. Haptoglobin also acts as an antioxidant, has antibacterial activity and plays a role in modulating many aspects of the acute phase response. Hemoglobin/haptoglobin complexes are rapidly cleared by the macrophage CD163 scavenger receptor expressed on the surface of liver Kupfer cells through an endocytic lysosomal degradation pathway. This is Haptoglobin (HP) from Pongo abelii (Sumatran orangutan).